The following is a 364-amino-acid chain: NF-kappa-B inhibitor epsilon (364 aa).

A disordered region spans residues 1 to 108 (MSDARKGPDE…GSPLPPAGVL (108 aa)). Position 18 is a phosphoserine (serine 18). Over residues 36 to 48 (PGSGSSQSGCPQP) the composition is skewed to low complexity. Over residues 51–70 (HAPETHKEPEKEDADGERAD) the composition is skewed to basic and acidic residues. Over residues 93 to 104 (PSPPAPGSPLPP) the composition is skewed to pro residues. ANK repeat units lie at residues 122–155 (DGDTLLHLAVIHEAPSVLFCCLAFLPQEVLDIQN), 157–186 (LYQTALHLAVHLDQPDVVRALVLKGASRIL), 190–219 (HGDTALHVACRRQNLACACCLLEEQPEPGR), 233–262 (QGLACLHIATLQRNQPLIELLLQNGADIDV), 267–296 (SGKTALHLAVETQERSLVQFLLQAGARVDA), and 300–329 (NGCTPLHLAAGRGLNSISSTLCEAGADSLL).

It belongs to the NF-kappa-B inhibitor family. Interacts with RELA, REL, NFKB1 nuclear factor NF-kappa-B p50 subunit and NFKB2 nuclear factor NF-kappa-B p52 subunit. Interacts with HNRNPA2B1; the interaction may be mediated by the RRM2 domain of HNRNPA2B1, and HNRNPA2B1 may interact simultaneously with FAM76B and either NFKBIA or NFKBIE to form a complex. In terms of processing, serine phosphorylated; followed by proteasome-dependent degradation.

Its subcellular location is the cytoplasm. Functionally, sequesters NF-kappa-B transcription factor complexes in the cytoplasm, thereby inhibiting their activity. Sequestered complexes include NFKB1/p50-RELA/p65 and NFKB1/p50-REL/c-Rel complexes. Limits B-cell activation in response to pathogens, and also plays an important role in B-cell development. The protein is NF-kappa-B inhibitor epsilon (Nfkbie) of Mus musculus (Mouse).